Reading from the N-terminus, the 149-residue chain is Nucleoside diphosphate kinase (149 aa).

Residues lysine 9, phenylalanine 57, arginine 85, threonine 91, arginine 102, and asparagine 112 each contribute to the ATP site. Histidine 115 acts as the Pros-phosphohistidine intermediate in catalysis.

The protein belongs to the NDK family. As to quaternary structure, homotetramer. Mg(2+) is required as a cofactor.

Its subcellular location is the cytoplasm. It carries out the reaction a 2'-deoxyribonucleoside 5'-diphosphate + ATP = a 2'-deoxyribonucleoside 5'-triphosphate + ADP. It catalyses the reaction a ribonucleoside 5'-diphosphate + ATP = a ribonucleoside 5'-triphosphate + ADP. Major role in the synthesis of nucleoside triphosphates other than ATP. The ATP gamma phosphate is transferred to the NDP beta phosphate via a ping-pong mechanism, using a phosphorylated active-site intermediate. This chain is Nucleoside diphosphate kinase, found in Acaryochloris marina (strain MBIC 11017).